The chain runs to 161 residues: Calcium-binding protein CML24 (161 aa).

EF-hand domains follow at residues 13–48 (GSMD…LSPT), 49–84 (ASPE…GIGG), 90–125 (NDVS…LGEK), and 126–161 (CSVQ…GGGA). Ca(2+) contacts are provided by Asp-26, Asn-28, Asp-30, Lys-32, Glu-37, Asp-62, Asp-64, Asn-66, Glu-73, Asp-103, Asp-105, Asn-107, Arg-109, Glu-114, Asp-139, Asp-141, Asp-143, Cys-145, and Glu-150.

Expressed in seed coat, seedling radical, cotyledons, hypocotyl, shoot apex and elongating root. Expressed in the vasculature of cotyledons, leaves and roots. Highly expressed in guard cells, trichomes and hydathodes. Expressed in inflorescence stem branch points, silique abscission zone, young and mature styles and stigmatic papillae, mature anthers and developing seed.

Its function is as follows. Calcium-binding protein that may positively regulate abscisic acid (ABA) inhibition of germination and seedling development. May be required for photoperiod-induced flowering and function in ion homeostasis. This is Calcium-binding protein CML24 (CML24) from Arabidopsis thaliana (Mouse-ear cress).